The sequence spans 259 residues: uncharacterized protein (259 aa).

This is an uncharacterized protein from Bacillus anthracis.